A 224-amino-acid chain; its full sequence is tRNA (guanine-N(7)-)-methyltransferase (224 aa).

Residues Glu54, Glu79, Glu106, and Asp129 each contribute to the S-adenosyl-L-methionine site. The active site involves Asp129. Lys133 and Asp165 together coordinate substrate.

Belongs to the class I-like SAM-binding methyltransferase superfamily. TrmB family.

The enzyme catalyses guanosine(46) in tRNA + S-adenosyl-L-methionine = N(7)-methylguanosine(46) in tRNA + S-adenosyl-L-homocysteine. It functions in the pathway tRNA modification; N(7)-methylguanine-tRNA biosynthesis. Functionally, catalyzes the formation of N(7)-methylguanine at position 46 (m7G46) in tRNA. This Chlamydia muridarum (strain MoPn / Nigg) protein is tRNA (guanine-N(7)-)-methyltransferase.